The chain runs to 87 residues: Small ribosomal subunit protein uS17 (87 aa).

Belongs to the universal ribosomal protein uS17 family. In terms of assembly, part of the 30S ribosomal subunit.

Its function is as follows. One of the primary rRNA binding proteins, it binds specifically to the 5'-end of 16S ribosomal RNA. In Thiobacillus denitrificans (strain ATCC 25259 / T1), this protein is Small ribosomal subunit protein uS17.